The sequence spans 244 residues: WUSCHEL-related homeobox 3 (244 aa).

Positions 4 to 68 (VASTRWCPTP…NHKARDRQKL (65 aa)) form a DNA-binding region, homeobox; WUS-type.

Belongs to the WUS homeobox family. In terms of tissue distribution, expressed in aerial parts of seedlings, inflorescences and flowers at low level. Expressed in a restricted number of L1 cells at the lateral regions of flower primordia.

It localises to the nucleus. Its function is as follows. Probable transcription factor required to initiate organ founder cells in a lateral domain of shoot meristems. Involved in the lateral sepal axis-dependent development of flowers, probably by regulating the proliferation of L1 cells at the lateral region of flower primordia. Required for the formation of the margin cells of the first and second whorl organs. The protein is WUSCHEL-related homeobox 3 (WOX3) of Arabidopsis thaliana (Mouse-ear cress).